Reading from the N-terminus, the 496-residue chain is Galactan beta-1,4-galactosyltransferase GALS1 (496 aa).

Residues 22-42 form a helical membrane-spanning segment; sequence IIATLLALSLVMIVWNLPPYY. Positions 232 to 464 constitute a GT92 domain; the sequence is DYLYCGSSLY…AKKKVTLYNK (233 aa).

It belongs to the glycosyltransferase 92 family. Expressed in root vasculature, mature leaves, trichomes, flowers, siliques and seeds.

Its subcellular location is the golgi apparatus membrane. Functionally, involved in the biosynthesis of beta-1,4-galactan. Can transfer galactose residues from UDP-galactose to beta-1,4-galactopentaose in vitro. Forms specifically beta-1,4-galactosyl linkages and can add successive beta-1,4-galactosyl residues to the acceptor. Beta-1,4-galactans are abundant polysaccharides in plant cell walls and are found as side-chain of rhamnogalacturonan I, which is a major component of pectin. This chain is Galactan beta-1,4-galactosyltransferase GALS1, found in Arabidopsis thaliana (Mouse-ear cress).